Reading from the N-terminus, the 347-residue chain is Autoinducer 2 import system permease protein LsrC (347 aa).

9 helical membrane passes run 14–34, 39–59, 72–92, 93–113, 115–135, 155–175, 213–233, 249–269, and 284–304; these read LLAI…YLSV, MVFS…MVML, GMCA…PVAC, LATL…VAWL, IPAI…MLLW, VFLG…LMAW, LNGG…GFIP, VLGG…ILGA, and IPAW…LVFD.

The protein belongs to the binding-protein-dependent transport system permease family. AraH/RbsC subfamily. The complex is composed of two ATP-binding proteins (LsrA), two transmembrane proteins (LsrC and LsrD) and a solute-binding protein (LsrB).

The protein resides in the cell inner membrane. Functionally, part of the ABC transporter complex LsrABCD involved in autoinducer 2 (AI-2) import. Probably responsible for the translocation of the substrate across the membrane. This is Autoinducer 2 import system permease protein LsrC (lsrC) from Salmonella typhi.